A 476-amino-acid polypeptide reads, in one-letter code: Ribulose bisphosphate carboxylase large chain (476 aa).

Residues Asn-124 and Thr-174 each coordinate substrate. The active-site Proton acceptor is the Lys-176. Residue Lys-178 coordinates substrate. Mg(2+)-binding residues include Lys-202, Asp-204, and Glu-205. At Lys-202 the chain carries N6-carboxylysine. His-295 serves as the catalytic Proton acceptor. Arg-296, His-328, and Ser-380 together coordinate substrate.

This sequence belongs to the RuBisCO large chain family. Type I subfamily. In terms of assembly, heterohexadecamer of 8 large chains and 8 small chains; disulfide-linked. The disulfide link is formed within the large subunit homodimers. Mg(2+) serves as cofactor. The disulfide bond which can form in the large chain dimeric partners within the hexadecamer appears to be associated with oxidative stress and protein turnover.

It is found in the carboxysome. The catalysed reaction is 2 (2R)-3-phosphoglycerate + 2 H(+) = D-ribulose 1,5-bisphosphate + CO2 + H2O. It catalyses the reaction D-ribulose 1,5-bisphosphate + O2 = 2-phosphoglycolate + (2R)-3-phosphoglycerate + 2 H(+). In terms of biological role, ruBisCO catalyzes two reactions: the carboxylation of D-ribulose 1,5-bisphosphate, the primary event in carbon dioxide fixation, as well as the oxidative fragmentation of the pentose substrate in the photorespiration process. Both reactions occur simultaneously and in competition at the same active site. This Trichodesmium erythraeum (strain IMS101) protein is Ribulose bisphosphate carboxylase large chain.